Here is a 415-residue protein sequence, read N- to C-terminus: MTEKLQPLRGMKDLLPDDYKVHDYIINKARDVGVLYGYKQMSIPILEYTKVFNRSMGESSDVISKEIYSFLDKSNESVALRPEFTAGIIRSFISNGLQHKLPLKFFSTGPVFRYDRPQAGRQRQFHQLNYEYIGAKGAITDAETLKLAVDILKALEIEQDTILELNSLGCSESRSVYQQKLVEYLNDFKDQLSEESKIRLTKNPMRILDSKSEIDQKIIAAAPILSEYYTDESKEYFEELIKYLDILGVKYVINPRLVRGLDYYCHTAFEFTTKKLGSQSTILAGGRYDGLAKIMGNNDDVPAIGFAAGIERIALMREYNISEVKPVFVLPIGENNICYALEIVDKLRLQNISTIIDPVGKIAKRIQRVLNENAKFIIFIGDEEQANNSLKLKDLEKKEEYIVDFAKVLELLKKY.

The protein belongs to the class-II aminoacyl-tRNA synthetase family. As to quaternary structure, homodimer.

The protein localises to the cytoplasm. The enzyme catalyses tRNA(His) + L-histidine + ATP = L-histidyl-tRNA(His) + AMP + diphosphate + H(+). The sequence is that of Histidine--tRNA ligase from Rickettsia felis (strain ATCC VR-1525 / URRWXCal2) (Rickettsia azadi).